The chain runs to 535 residues: Phosphoenolpyruvate carboxykinase (ATP) (535 aa).

Residues R59, Y201, and K207 each contribute to the substrate site. ATP contacts are provided by residues K207, H226, and 243-251; that span reads GLSGTGKTT. 2 residues coordinate Mn(2+): K207 and H226. D264 contributes to the Mn(2+) binding site. ATP is bound by residues E292, R328, 444–445, and T450; that span reads RI. R328 lines the substrate pocket.

Belongs to the phosphoenolpyruvate carboxykinase (ATP) family. The cofactor is Mn(2+).

It localises to the cytoplasm. The catalysed reaction is oxaloacetate + ATP = phosphoenolpyruvate + ADP + CO2. It functions in the pathway carbohydrate biosynthesis; gluconeogenesis. Involved in the gluconeogenesis. Catalyzes the conversion of oxaloacetate (OAA) to phosphoenolpyruvate (PEP) through direct phosphoryl transfer between the nucleoside triphosphate and OAA. This Porphyromonas gingivalis (strain ATCC BAA-308 / W83) protein is Phosphoenolpyruvate carboxykinase (ATP).